The sequence spans 60 residues: Large ribosomal subunit protein uL30 (60 aa).

This sequence belongs to the universal ribosomal protein uL30 family. Part of the 50S ribosomal subunit.

The polypeptide is Large ribosomal subunit protein uL30 (Streptococcus suis (strain 98HAH33)).